The chain runs to 878 residues: Alanine--tRNA ligase (878 aa).

Zn(2+) contacts are provided by histidine 562, histidine 566, cysteine 670, and histidine 674.

This sequence belongs to the class-II aminoacyl-tRNA synthetase family. Requires Zn(2+) as cofactor.

Its subcellular location is the cytoplasm. The catalysed reaction is tRNA(Ala) + L-alanine + ATP = L-alanyl-tRNA(Ala) + AMP + diphosphate. Catalyzes the attachment of alanine to tRNA(Ala) in a two-step reaction: alanine is first activated by ATP to form Ala-AMP and then transferred to the acceptor end of tRNA(Ala). Also edits incorrectly charged Ser-tRNA(Ala) and Gly-tRNA(Ala) via its editing domain. This is Alanine--tRNA ligase from Acinetobacter baylyi (strain ATCC 33305 / BD413 / ADP1).